Here is a 519-residue protein sequence, read N- to C-terminus: Probable cytosol aminopeptidase (519 aa).

Positions 283 and 288 each coordinate Mn(2+). K295 is an active-site residue. D306, D365, and E367 together coordinate Mn(2+). The active site involves R369.

Belongs to the peptidase M17 family. Mn(2+) serves as cofactor.

The protein resides in the cytoplasm. It catalyses the reaction Release of an N-terminal amino acid, Xaa-|-Yaa-, in which Xaa is preferably Leu, but may be other amino acids including Pro although not Arg or Lys, and Yaa may be Pro. Amino acid amides and methyl esters are also readily hydrolyzed, but rates on arylamides are exceedingly low.. The catalysed reaction is Release of an N-terminal amino acid, preferentially leucine, but not glutamic or aspartic acids.. Functionally, presumably involved in the processing and regular turnover of intracellular proteins. Catalyzes the removal of unsubstituted N-terminal amino acids from various peptides. This chain is Probable cytosol aminopeptidase, found in Mycobacterium ulcerans (strain Agy99).